The primary structure comprises 294 residues: Transcription termination/antitermination protein NusG (294 aa).

Residues 1–91 (MSDPNLNDAV…EEAEPAAPVD (91 aa)) are disordered. A compositionally biased stretch (acidic residues) spans 25–39 (DIVEAADSVDPDQAE). The segment covering 40–53 (AADLAAGEPAERAA) has biased composition (low complexity). Acidic residues predominate over residues 59–85 (DDSDEDDAAAEEAVEADDESADEEEAE).

This sequence belongs to the NusG family.

Functionally, participates in transcription elongation, termination and antitermination. This chain is Transcription termination/antitermination protein NusG, found in Streptomyces griseus.